A 305-amino-acid chain; its full sequence is MKHLNIYIMLLGFSIFTGATFNLAKYTVGYFSPSSSAAWRFGLAAAVMLIILIFTEGIKKSQLRKNAVSYIVLGIIGIFGFNALFFVGLKYTSPVNGALIMGLNPLLTAILARIILKDNMTKKQVLGIFFAFIGVLLVITQGSIETIKTLSISGGDLIIFTGNVCWALYGVLGRRFVKDGTPLSTTTYTMVIGAVSLIVVSLFTSKPVSLSNIPIGVWGAIAFMAFFTSVLGYLWWNQGIKEIGASKTSLFFNLVPVVTMIISFAVGTPIKVFQVIGAVLVILGVLTASGVIRIPKYNTKEQSAI.

10 consecutive transmembrane segments (helical) span residues 4 to 24, 38 to 58, 67 to 87, 95 to 115, 125 to 145, 152 to 172, 183 to 203, 215 to 235, 250 to 270, and 272 to 292; these read LNIYIMLLGFSIFTGATFNLA, AWRFGLAAAVMLIILIFTEGI, AVSYIVLGIIGIFGFNALFFV, VNGALIMGLNPLLTAILARII, VLGIFFAFIGVLLVITQGSIE, ISGGDLIIFTGNVCWALYGVL, LSTTTYTMVIGAVSLIVVSLF, IGVWGAIAFMAFFTSVLGYLW, LFFNLVPVVTMIISFAVGTPI, and VFQVIGAVLVILGVLTASGVI. 2 EamA domains span residues 15–140 and 164–290; these read IFTG…LVIT and VCWA…TASG.

Belongs to the EamA transporter family.

The protein localises to the cell membrane. This is an uncharacterized protein from Bacillus subtilis (strain 168).